We begin with the raw amino-acid sequence, 110 residues long: Nucleoid-associated protein SYO3AOP1_1366 (110 aa).

It belongs to the YbaB/EbfC family. In terms of assembly, homodimer.

The protein resides in the cytoplasm. Its subcellular location is the nucleoid. In terms of biological role, binds to DNA and alters its conformation. May be involved in regulation of gene expression, nucleoid organization and DNA protection. The sequence is that of Nucleoid-associated protein SYO3AOP1_1366 from Sulfurihydrogenibium sp. (strain YO3AOP1).